The following is a 518-amino-acid chain: GMP synthase [glutamine-hydrolyzing] (518 aa).

One can recognise a Glutamine amidotransferase type-1 domain in the interval R6 to D200. The active-site Nucleophile is C84. Residues H175 and E177 contribute to the active site. The 193-residue stretch at W201 to R393 folds into the GMPS ATP-PPase domain. S228–S234 is a binding site for ATP.

In terms of assembly, homodimer.

It catalyses the reaction XMP + L-glutamine + ATP + H2O = GMP + L-glutamate + AMP + diphosphate + 2 H(+). It participates in purine metabolism; GMP biosynthesis; GMP from XMP (L-Gln route): step 1/1. Catalyzes the synthesis of GMP from XMP. The polypeptide is GMP synthase [glutamine-hydrolyzing] (Cereibacter sphaeroides (strain ATCC 17023 / DSM 158 / JCM 6121 / CCUG 31486 / LMG 2827 / NBRC 12203 / NCIMB 8253 / ATH 2.4.1.) (Rhodobacter sphaeroides)).